The following is a 157-amino-acid chain: uncharacterized protein (157 aa).

This is an uncharacterized protein from Saccharomyces cerevisiae (strain ATCC 204508 / S288c) (Baker's yeast).